The sequence spans 180 residues: Bifunctional protein PyrR (180 aa).

Residues 101–113 carry the PRPP-binding motif; it reads VILVDDVLYTGRT.

This sequence belongs to the purine/pyrimidine phosphoribosyltransferase family. PyrR subfamily. In terms of assembly, homodimer and homohexamer; in equilibrium.

The catalysed reaction is UMP + diphosphate = 5-phospho-alpha-D-ribose 1-diphosphate + uracil. In terms of biological role, regulates transcriptional attenuation of the pyrimidine nucleotide (pyr) operon by binding in a uridine-dependent manner to specific sites on pyr mRNA. This disrupts an antiterminator hairpin in the RNA and favors formation of a downstream transcription terminator, leading to a reduced expression of downstream genes. Functionally, also displays a weak uracil phosphoribosyltransferase activity which is not physiologically significant. In Bacillus cytotoxicus (strain DSM 22905 / CIP 110041 / 391-98 / NVH 391-98), this protein is Bifunctional protein PyrR.